Reading from the N-terminus, the 241-residue chain is Triosephosphate isomerase (241 aa).

9 to 11 (NWK) lines the substrate pocket. H96 functions as the Electrophile in the catalytic mechanism. Catalysis depends on E165, which acts as the Proton acceptor. Substrate is bound by residues G171, S204, and 225–226 (GG).

Belongs to the triosephosphate isomerase family. Homodimer.

It is found in the cytoplasm. It catalyses the reaction D-glyceraldehyde 3-phosphate = dihydroxyacetone phosphate. The protein operates within carbohydrate biosynthesis; gluconeogenesis. It participates in carbohydrate degradation; glycolysis; D-glyceraldehyde 3-phosphate from glycerone phosphate: step 1/1. Functionally, involved in the gluconeogenesis. Catalyzes stereospecifically the conversion of dihydroxyacetone phosphate (DHAP) to D-glyceraldehyde-3-phosphate (G3P). This chain is Triosephosphate isomerase, found in Prochlorococcus marinus (strain MIT 9515).